A 363-amino-acid polypeptide reads, in one-letter code: Ethanol acetyltransferase 1 (363 aa).

A mitochondrion-targeting transit peptide spans 1 to 19 (MLLAYTVRPSNWSFTRRAY). Residues 65 to 164 (PIIFYHGLLG…FSAACIIDNS (100 aa)) form the AB hydrolase-1 domain. Catalysis depends on charge relay system residues Ser138, Asp162, and His313.

Belongs to the AB hydrolase superfamily.

It localises to the mitochondrion. It catalyses the reaction ethanol + acetyl-CoA = ethyl acetate + CoA. It carries out the reaction acetyl-CoA + H2O = acetate + CoA + H(+). The enzyme catalyses ethyl acetate + H2O = ethanol + acetate + H(+). Its function is as follows. Alcohol acetyltransferase that catalyzes the synthesis of ethyl acetate from ethanol and acetyl-CoA. Can also function as a thioesterase by hydrolyzing acetyl-CoA in the absence of ethanol, as well as esterase hydrolyzing ethyl acetate. The polypeptide is Ethanol acetyltransferase 1 (EAT1) (Kluyveromyces marxianus (strain DMKU3-1042 / BCC 29191 / NBRC 104275) (Yeast)).